Here is a 498-residue protein sequence, read N- to C-terminus: POU domain protein 2, isoform A (498 aa).

Residues 1-30 are compositionally biased toward low complexity; it reads MMVLQQQQQQRLWDATTTSNTNTQTQQSAN. A disordered region spans residues 1 to 35; the sequence is MMVLQQQQQQRLWDATTTSNTNTQTQQSANVESTP. Phosphoserine is present on residues serine 72, serine 211, serine 215, serine 217, and serine 219. Residues 191-273 are disordered; it reads QMKQQQREDP…STPKPTSGLT (83 aa). Positions 207-222 are enriched in low complexity; the sequence is PLAKSPLRSPSLSPVP. Positions 228 to 251 are enriched in polar residues; sequence QQRTPPNSMTANSLGMSSAVMTPN. Residues 252–270 are compositionally biased toward low complexity; it reads TPSMQQQPQLQQSTPKPTS. The 75-residue stretch at 286 to 360 folds into the POU-specific domain; sequence EETTDLEELE…LLQKWLEDAD (75 aa). The segment at residues 391 to 450 is a DNA-binding region (homeobox); the sequence is RRKKRTSIETTVRTTLEKAFLMNCKPTSEEISQLSERLNMDKEVIRVWFCNRRQKEKRIN.

Belongs to the POU transcription factor family. Class-2 subfamily. As to expression, initial expression in cellular blastoderm stage, then in ectodermal stripes during germband extension. Broad expression in the neuroectoderm followed by limitation to discrete subsets of CNS cells, and expression in specific PNS neurons and support cells.

Its subcellular location is the nucleus. In terms of biological role, DNA-binding regulatory protein implicated in early development. Involved in neuronal cell fate decision. May act as an octamer-dependent activator of transcription. Could also play an early role in specific ectodermal cells, and a subsequent role in the embryonic nervous system. This is POU domain protein 2, isoform A (pdm2) from Drosophila melanogaster (Fruit fly).